Consider the following 580-residue polypeptide: Acyl-coenzyme A synthetase ACSM4, mitochondrial (580 aa).

The transit peptide at 1-22 (MKIFFRYQTFRFIWLTKPPGRR) directs the protein to the mitochondrion. ATP contacts are provided by residues 229-237 (TSGTTGFPK), 368-373 (EGYGQT), aspartate 455, arginine 470, and lysine 566.

Belongs to the ATP-dependent AMP-binding enzyme family. The cofactor is Mg(2+). Mn(2+) is required as a cofactor.

The protein localises to the mitochondrion. The enzyme catalyses a medium-chain fatty acid + ATP + CoA = a medium-chain fatty acyl-CoA + AMP + diphosphate. It catalyses the reaction hexanoate + ATP + CoA = hexanoyl-CoA + AMP + diphosphate. It carries out the reaction octanoate + ATP + CoA = octanoyl-CoA + AMP + diphosphate. The catalysed reaction is decanoate + ATP + CoA = decanoyl-CoA + AMP + diphosphate. The enzyme catalyses dodecanoate + ATP + CoA = dodecanoyl-CoA + AMP + diphosphate. Catalyzes the activation of fatty acids by CoA to produce an acyl-CoA, the first step in fatty acid metabolism. Capable of activating medium-chain fatty acids with a preference for C6-12 fatty acids. In Homo sapiens (Human), this protein is Acyl-coenzyme A synthetase ACSM4, mitochondrial (ACSM4).